Reading from the N-terminus, the 345-residue chain is Protein RecA (345 aa).

ATP is bound at residue 66–73; that stretch reads GPESSGKT.

It belongs to the RecA family.

It is found in the cytoplasm. Functionally, can catalyze the hydrolysis of ATP in the presence of single-stranded DNA, the ATP-dependent uptake of single-stranded DNA by duplex DNA, and the ATP-dependent hybridization of homologous single-stranded DNAs. It interacts with LexA causing its activation and leading to its autocatalytic cleavage. The protein is Protein RecA of Helicobacter hepaticus (strain ATCC 51449 / 3B1).